A 403-amino-acid polypeptide reads, in one-letter code: Histidine decarboxylase (403 aa).

A substrate-binding site is contributed by histidine 120. An N6-(pyridoxal phosphate)lysine modification is found at lysine 233.

Belongs to the group II decarboxylase family. As to quaternary structure, homotetramer. Requires pyridoxal 5'-phosphate as cofactor.

It carries out the reaction L-histidine + H(+) = histamine + CO2. This chain is Histidine decarboxylase, found in Pseudomonas entomophila (strain L48).